The sequence spans 224 residues: MGILGWVGLIAVGVLCVRGGLSSTEYVIRSRVAREVGDILKVPCVPLPSDDLDWRYETPSAINYALIDGIFLRYHCPGLDTVLWDRHAQKAYWVNPFLFVAGFLEDLSHPAFPANTQETETRLALYKEIRQALDSRKQAASHTPVKAGCVNFDYSRTRRCVGRQDLGPTNGTSGRTPVLPPDDEAGLQPKPLTTPPPIIATSDPTPRRDAATKSRRRRPHSRRL.

The signal sequence occupies residues 1 to 22 (MGILGWVGLIAVGVLCVRGGLS). The segment at 20-161 (GLSSTEYVIR…FDYSRTRRCV (142 aa)) is interaction with gH. Positions 20–161 (GLSSTEYVIR…FDYSRTRRCV (142 aa)) are interaction with gL. One can recognise a gL alphaherpesvirus-type domain in the interval 23-201 (STEYVIRSRV…LTTPPPIIAT (179 aa)). 2 disulfide bridges follow: cysteine 44-cysteine 76 and cysteine 149-cysteine 160. Positions 161–224 (VGRQDLGPTN…RRRRPHSRRL (64 aa)) are disordered. N-linked (GlcNAc...) asparagine; by host glycosylation is present at asparagine 170. The span at 213 to 224 (KSRRRRPHSRRL) shows a compositional bias: basic residues.

It belongs to the herpesviridae glycoprotein L (gL) family. Alphaherpesvirinae gL subfamily. In terms of assembly, interacts with glycoprotein H (gH); this interaction is necessary for the correct processing and cell surface expression of gH. The heterodimer gH/gL seems to interact with gB trimers during fusion. In terms of processing, N-glycosylated, O-glycosylated, and sialylated.

The protein localises to the virion membrane. It localises to the host cell membrane. It is found in the host Golgi apparatus. The protein resides in the host trans-Golgi network. The heterodimer glycoprotein H-glycoprotein L is required for the fusion of viral and plasma membranes leading to virus entry into the host cell. Acts as a functional inhibitor of gH and maintains gH in an inhibited form. Upon binding to host integrins, gL dissociates from gH leading to activation of the viral fusion glycoproteins gB and gH. This is Envelope glycoprotein L from Human herpesvirus 1 (strain KOS) (HHV-1).